A 542-amino-acid polypeptide reads, in one-letter code: CTP synthase (542 aa).

Positions 1–265 (MTRYVFITGG…DREILAHFQM (265 aa)) are amidoligase domain. Residue serine 13 coordinates CTP. Serine 13 serves as a coordination point for UTP. ATP is bound by residues 14 to 19 (SLGKGL) and aspartate 71. 2 residues coordinate Mg(2+): aspartate 71 and glutamate 139. CTP is bound by residues 146–148 (DIE), 186–191 (KTKPTQ), and lysine 222. UTP contacts are provided by residues 186–191 (KTKPTQ) and lysine 222. 238–240 (RDV) contributes to the ATP binding site. Residues 291-541 (TIAIVGKYTG…IAAAIEQSRL (251 aa)) enclose the Glutamine amidotransferase type-1 domain. Residue glycine 353 participates in L-glutamine binding. Cysteine 380 acts as the Nucleophile; for glutamine hydrolysis in catalysis. L-glutamine contacts are provided by residues 381–384 (FGMQ), glutamate 404, and arginine 469. Residues histidine 514 and glutamate 516 contribute to the active site.

Belongs to the CTP synthase family. In terms of assembly, homotetramer.

It carries out the reaction UTP + L-glutamine + ATP + H2O = CTP + L-glutamate + ADP + phosphate + 2 H(+). The catalysed reaction is L-glutamine + H2O = L-glutamate + NH4(+). It catalyses the reaction UTP + NH4(+) + ATP = CTP + ADP + phosphate + 2 H(+). Its pathway is pyrimidine metabolism; CTP biosynthesis via de novo pathway; CTP from UDP: step 2/2. Allosterically activated by GTP, when glutamine is the substrate; GTP has no effect on the reaction when ammonia is the substrate. The allosteric effector GTP functions by stabilizing the protein conformation that binds the tetrahedral intermediate(s) formed during glutamine hydrolysis. Inhibited by the product CTP, via allosteric rather than competitive inhibition. Its function is as follows. Catalyzes the ATP-dependent amination of UTP to CTP with either L-glutamine or ammonia as the source of nitrogen. Regulates intracellular CTP levels through interactions with the four ribonucleotide triphosphates. The protein is CTP synthase of Methylorubrum populi (strain ATCC BAA-705 / NCIMB 13946 / BJ001) (Methylobacterium populi).